A 77-amino-acid chain; its full sequence is U8-lycotoxin-Ls1g (77 aa).

An N-terminal signal peptide occupies residues 1 to 20 (MKLIIFTGLVLFAIVSLIEV). Residues 21-26 (QADNER) constitute a propeptide that is removed on maturation.

This sequence belongs to the neurotoxin 19 (CSTX) family. 08 (U8-Lctx) subfamily. Contains 4 disulfide bonds. Expressed by the venom gland.

Its subcellular location is the secreted. In Lycosa singoriensis (Wolf spider), this protein is U8-lycotoxin-Ls1g.